Consider the following 87-residue polypeptide: RNA-binding protein Hfq (87 aa).

Residues Asp-9 to Val-68 form the Sm domain. Positions Ala-65–Glu-87 are disordered. Over residues His-71–Glu-87 the composition is skewed to basic and acidic residues.

Belongs to the Hfq family.

In terms of biological role, RNA chaperone that binds small regulatory RNA (sRNAs) and mRNAs to facilitate mRNA translational regulation in response to envelope stress, environmental stress and changes in metabolite concentrations. Also binds with high specificity to tRNAs. Essential for virulence in the suckling mouse model of cholera pathogenesis. The sequence is that of RNA-binding protein Hfq from Vibrio cholerae serotype O1 (strain ATCC 39315 / El Tor Inaba N16961).